The sequence spans 435 residues: Adenylosuccinate synthetase (435 aa).

GTP-binding positions include 22 to 28 (GDEGKGK) and 50 to 52 (GHT). D23 acts as the Proton acceptor in catalysis. The Mg(2+) site is built by D23 and G50. IMP-binding positions include 23 to 26 (DEGK), 48 to 51 (NAGH), T140, R154, Q235, T250, and R314. The active-site Proton donor is H51. 310–316 (ATTGRKR) provides a ligand contact to substrate. GTP is bound by residues R316, 342–344 (KLD), and 424–426 (SVG).

Belongs to the adenylosuccinate synthetase family. In terms of assembly, homodimer. The cofactor is Mg(2+).

It localises to the cytoplasm. The enzyme catalyses IMP + L-aspartate + GTP = N(6)-(1,2-dicarboxyethyl)-AMP + GDP + phosphate + 2 H(+). The protein operates within purine metabolism; AMP biosynthesis via de novo pathway; AMP from IMP: step 1/2. Plays an important role in the de novo pathway of purine nucleotide biosynthesis. Catalyzes the first committed step in the biosynthesis of AMP from IMP. The chain is Adenylosuccinate synthetase from Chlorobaculum parvum (strain DSM 263 / NCIMB 8327) (Chlorobium vibrioforme subsp. thiosulfatophilum).